A 458-amino-acid polypeptide reads, in one-letter code: Phosphoglucosamine mutase (458 aa).

Ser-109 serves as the catalytic Phosphoserine intermediate. Mg(2+) is bound by residues Ser-109, Asp-251, Asp-253, and Asp-255. At Ser-109 the chain carries Phosphoserine.

It belongs to the phosphohexose mutase family. The cofactor is Mg(2+). In terms of processing, activated by phosphorylation.

The catalysed reaction is alpha-D-glucosamine 1-phosphate = D-glucosamine 6-phosphate. In terms of biological role, catalyzes the conversion of glucosamine-6-phosphate to glucosamine-1-phosphate. This Myxococcus xanthus (strain DK1622) protein is Phosphoglucosamine mutase.